A 181-amino-acid polypeptide reads, in one-letter code: MISLSFLIHNPLKKWKLKPSISINGYRSTFTMAFPCAQFRPCHCHATKDSLNTVADVRHCLTEYILWVSHRWTHRESAGSLYRLLISFRTDATELFGGELKDSLPWDNIDNCVEIIKCFIRNDSMKTAEELRAIIGLCTQSAIVSGRVFNDKYIDILLMLRKILNENDYLTLLDHIRTAKY.

This Vaccinia virus (strain Copenhagen) (VACV) protein is Protein OPG005 (OPG005).